Consider the following 310-residue polypeptide: ADP-L-glycero-D-manno-heptose-6-epimerase (310 aa).

NADP(+)-binding positions include 10-11 (FI), 31-32 (DN), Lys38, Lys53, 75-79 (EGACS), and Asn92. Tyr140 serves as the catalytic Proton acceptor. An NADP(+)-binding site is contributed by Lys144. Residue Asn169 participates in substrate binding. The NADP(+) site is built by Val170 and Lys178. Catalysis depends on Lys178, which acts as the Proton acceptor. Substrate-binding positions include Ser180, His187, 201–204 (FEGS), Arg209, and Tyr272.

It belongs to the NAD(P)-dependent epimerase/dehydratase family. HldD subfamily. In terms of assembly, homopentamer. NADP(+) serves as cofactor.

The catalysed reaction is ADP-D-glycero-beta-D-manno-heptose = ADP-L-glycero-beta-D-manno-heptose. It participates in nucleotide-sugar biosynthesis; ADP-L-glycero-beta-D-manno-heptose biosynthesis; ADP-L-glycero-beta-D-manno-heptose from D-glycero-beta-D-manno-heptose 7-phosphate: step 4/4. Its function is as follows. Catalyzes the interconversion between ADP-D-glycero-beta-D-manno-heptose and ADP-L-glycero-beta-D-manno-heptose via an epimerization at carbon 6 of the heptose. In Citrobacter koseri (strain ATCC BAA-895 / CDC 4225-83 / SGSC4696), this protein is ADP-L-glycero-D-manno-heptose-6-epimerase.